The primary structure comprises 219 residues: Large ribosomal subunit protein uL3 (219 aa).

The tract at residues 124-154 (FSGSIKRHNQSEGPKSHGSRYHRRPGSMGPI) is disordered.

It belongs to the universal ribosomal protein uL3 family. Part of the 50S ribosomal subunit. Forms a cluster with proteins L14 and L19.

One of the primary rRNA binding proteins, it binds directly near the 3'-end of the 23S rRNA, where it nucleates assembly of the 50S subunit. This chain is Large ribosomal subunit protein uL3, found in Phytoplasma mali (strain AT).